A 363-amino-acid chain; its full sequence is Ethanolamine kinase 1 (363 aa).

It belongs to the choline/ethanolamine kinase family.

The protein localises to the cytoplasm. The enzyme catalyses ethanolamine + ATP = phosphoethanolamine + ADP + H(+). It participates in phospholipid metabolism; phosphatidylethanolamine biosynthesis; phosphatidylethanolamine from ethanolamine: step 1/3. Highly specific for ethanolamine phosphorylation. May be a rate-controlling step in phosphatidylethanolamine biosynthesis. This chain is Ethanolamine kinase 1 (Etnk1), found in Mus musculus (Mouse).